Here is a 143-residue protein sequence, read N- to C-terminus: uncharacterized protein (143 aa).

Residues 35 to 59 (ITKDRGDRDDGRYGEPRIQRKPGQL) form a disordered region. Residues 36-52 (TKDRGDRDDGRYGEPRI) show a composition bias toward basic and acidic residues.

This is an uncharacterized protein from Streptomyces fradiae (Streptomyces roseoflavus).